We begin with the raw amino-acid sequence, 502 residues long: UPF0371 protein CLD_0424 (502 aa).

Belongs to the UPF0371 family.

The protein is UPF0371 protein CLD_0424 of Clostridium botulinum (strain Okra / Type B1).